Reading from the N-terminus, the 232-residue chain is Large ribosomal subunit protein uL1 (232 aa).

Belongs to the universal ribosomal protein uL1 family. In terms of assembly, part of the 50S ribosomal subunit.

Binds directly to 23S rRNA. The L1 stalk is quite mobile in the ribosome, and is involved in E site tRNA release. In terms of biological role, protein L1 is also a translational repressor protein, it controls the translation of the L11 operon by binding to its mRNA. The chain is Large ribosomal subunit protein uL1 from Xylella fastidiosa (strain 9a5c).